Consider the following 418-residue polypeptide: Tyrosine--tRNA ligase (418 aa).

Residue Tyr34 coordinates L-tyrosine. The short motif at 39–48 (PTADSLHLGH) is the 'HIGH' region element. Tyr169 and Gln173 together coordinate L-tyrosine. Residues 229 to 233 (KFGKS) carry the 'KMSKS' region motif. Lys232 is a binding site for ATP. The S4 RNA-binding domain occupies 352 to 418 (NNIVELLVSS…GKKKYFVLTY (67 aa)).

The protein belongs to the class-I aminoacyl-tRNA synthetase family. TyrS type 1 subfamily. Homodimer.

Its subcellular location is the cytoplasm. It catalyses the reaction tRNA(Tyr) + L-tyrosine + ATP = L-tyrosyl-tRNA(Tyr) + AMP + diphosphate + H(+). Its function is as follows. Catalyzes the attachment of tyrosine to tRNA(Tyr) in a two-step reaction: tyrosine is first activated by ATP to form Tyr-AMP and then transferred to the acceptor end of tRNA(Tyr). The protein is Tyrosine--tRNA ligase of Streptococcus pneumoniae (strain CGSP14).